We begin with the raw amino-acid sequence, 164 residues long: R-phycoerythrin alpha chain (164 aa).

(2R,3E)-phycoerythrobilin-binding residues include Cys82 and Cys139.

Belongs to the phycobiliprotein family. In terms of assembly, heterodimer of an alpha and a beta chain. In terms of processing, contains two covalently linked bilin chromophores.

Its subcellular location is the plastid. It is found in the chloroplast thylakoid membrane. Light-harvesting photosynthetic bile pigment-protein from the phycobiliprotein complex. The sequence is that of R-phycoerythrin alpha chain (cpeA) from Pyropia haitanensis (Red seaweed).